Here is a 94-residue protein sequence, read N- to C-terminus: uncharacterized protein (94 aa).

This is an uncharacterized protein from Helicobacter pylori (strain ATCC 700392 / 26695) (Campylobacter pylori).